A 196-amino-acid chain; its full sequence is SPRY domain-containing protein 7 (196 aa).

Positions 1-184 (MAASVFCCLR…FSEFYHTPPP (184 aa)) constitute a B30.2/SPRY domain.

This chain is SPRY domain-containing protein 7 (SPRYD7), found in Gallus gallus (Chicken).